Consider the following 63-residue polypeptide: Large ribosomal subunit protein uL29 (63 aa).

Belongs to the universal ribosomal protein uL29 family.

The polypeptide is Large ribosomal subunit protein uL29 (rpmC) (Buchnera aphidicola subsp. Acyrthosiphon kondoi (Acyrthosiphon kondoi symbiotic bacterium)).